The primary structure comprises 510 residues: ATP synthase subunit alpha (510 aa).

Gly-169–Thr-176 provides a ligand contact to ATP.

The protein belongs to the ATPase alpha/beta chains family. F-type ATPases have 2 components, CF(1) - the catalytic core - and CF(0) - the membrane proton channel. CF(1) has five subunits: alpha(3), beta(3), gamma(1), delta(1), epsilon(1). CF(0) has four main subunits: a(1), b(1), b'(1) and c(9-12).

The protein resides in the cell inner membrane. The catalysed reaction is ATP + H2O + 4 H(+)(in) = ADP + phosphate + 5 H(+)(out). Its function is as follows. Produces ATP from ADP in the presence of a proton gradient across the membrane. The alpha chain is a regulatory subunit. This is ATP synthase subunit alpha from Rhodopseudomonas palustris (strain HaA2).